Consider the following 478-residue polypeptide: ATP synthase subunit beta (478 aa).

Gly163–Thr170 contributes to the ATP binding site.

It belongs to the ATPase alpha/beta chains family. As to quaternary structure, F-type ATPases have 2 components, CF(1) - the catalytic core - and CF(0) - the membrane proton channel. CF(1) has five subunits: alpha(3), beta(3), gamma(1), delta(1), epsilon(1). CF(0) has three main subunits: a(1), b(2) and c(9-12). The alpha and beta chains form an alternating ring which encloses part of the gamma chain. CF(1) is attached to CF(0) by a central stalk formed by the gamma and epsilon chains, while a peripheral stalk is formed by the delta and b chains.

It localises to the cell inner membrane. The catalysed reaction is ATP + H2O + 4 H(+)(in) = ADP + phosphate + 5 H(+)(out). Functionally, produces ATP from ADP in the presence of a proton gradient across the membrane. The catalytic sites are hosted primarily by the beta subunits. The sequence is that of ATP synthase subunit beta from Aquifex pyrophilus.